The chain runs to 675 residues: Dihydrolipoyllysine-residue acetyltransferase component of pyruvate dehydrogenase complex (675 aa).

The Lipoyl-binding 1 domain maps to 2–77; it reads AFSVEMPELG…DVGGVIAIIG (76 aa). Lys-43 carries the N6-lipoyllysine modification. Residues 77 to 124 are disordered; sequence GDADETPANEAPADEAPAPAEEEEPVKEEPKKEAAPEAPAATGAATDV. Composition is skewed to low complexity over residues 84 to 95 and 112 to 124; these read ANEAPADEAPAP and PEAPAATGAATDV. A Lipoyl-binding 2 domain is found at 121–196; the sequence is ATDVEMPELG…DVGAVIARIG (76 aa). Residue Lys-162 is modified to N6-lipoyllysine. A disordered region spans residues 200–240; it reads AAAAPAEEEAAPAEEEEPVKEEPKKEAAPEAPAATGAATDV. A compositionally biased stretch (acidic residues) spans 205–218; sequence AEEEAAPAEEEEPV. The region spanning 237–312 is the Lipoyl-binding 3 domain; sequence ATDVEMPELG…DVGAVIARIG (76 aa). Lys-278 bears the N6-lipoyllysine mark. A disordered region spans residues 316-368; sequence AAAAPAEEEAAPAEEEEPVKEEPKKEEPKKEEPKKEAATTPAAASATVSASGD. Residues 321-334 are compositionally biased toward acidic residues; sequence AEEEAAPAEEEEPV. Basic and acidic residues predominate over residues 335–352; that stretch reads KEEPKKEEPKKEEPKKEA. Residues 353 to 366 are compositionally biased toward low complexity; sequence ATTPAAASATVSAS. Residues 372–409 enclose the Peripheral subunit-binding (PSBD) domain; the sequence is YVTPLVRKLAEKHGVDLNTVTGTGIGGRIRKQDVLAAA. Active-site residues include His-645 and Asp-649.

The protein belongs to the 2-oxoacid dehydrogenase family. As to quaternary structure, forms a 24-polypeptide structural core with octahedral symmetry. Part of an unusual ODH/PDH supercomplex, consisting of AceE (E1), AceF (E2), and Lpd (E3) together with OdhA (E1+E2). The cofactor is (R)-lipoate.

The catalysed reaction is N(6)-[(R)-dihydrolipoyl]-L-lysyl-[protein] + acetyl-CoA = N(6)-[(R)-S(8)-acetyldihydrolipoyl]-L-lysyl-[protein] + CoA. In terms of biological role, is essential for both 2-oxoglutarate dehydrogenase (ODH) and pyruvate dehydrogenase (PDH) activities, but AceF has exclusively transacetylase (and no transsuccinylase) activity. The lipoyl residues required for ODH activity are likely provided by AceF. The chain is Dihydrolipoyllysine-residue acetyltransferase component of pyruvate dehydrogenase complex (aceF) from Corynebacterium glutamicum (strain ATCC 13032 / DSM 20300 / JCM 1318 / BCRC 11384 / CCUG 27702 / LMG 3730 / NBRC 12168 / NCIMB 10025 / NRRL B-2784 / 534).